The sequence spans 275 residues: Diaminopimelate epimerase (275 aa).

Substrate is bound by residues asparagine 20 and asparagine 63. Residue cysteine 72 is the Proton donor of the active site. Substrate contacts are provided by residues 73 to 74 (GN), asparagine 179, and 197 to 198 (ER). The active-site Proton acceptor is cysteine 207. 208–209 (GT) provides a ligand contact to substrate.

This sequence belongs to the diaminopimelate epimerase family. As to quaternary structure, homodimer.

It is found in the cytoplasm. The catalysed reaction is (2S,6S)-2,6-diaminopimelate = meso-2,6-diaminopimelate. It functions in the pathway amino-acid biosynthesis; L-lysine biosynthesis via DAP pathway; DL-2,6-diaminopimelate from LL-2,6-diaminopimelate: step 1/1. Its function is as follows. Catalyzes the stereoinversion of LL-2,6-diaminopimelate (L,L-DAP) to meso-diaminopimelate (meso-DAP), a precursor of L-lysine and an essential component of the bacterial peptidoglycan. In Chlamydia trachomatis serovar A (strain ATCC VR-571B / DSM 19440 / HAR-13), this protein is Diaminopimelate epimerase.